Consider the following 580-residue polypeptide: MAQSQLAKGSRQTTGRPFQNKPARAARRLVIRAADAKEIVFDQESRRRLQAGINKVADAVGVTLGPRGRNVVLEQKFGVPQVINDGVSIRRAIELKDPVENAGAQLIKEVAGRTNDAAGDGTTTASVLAREMIHYGLQSVTAGANPIAVKRGLDKTAEYLVAKLKEHAKPVKGRDDIKNVASISAGNDNAIGEMIADALDKVGSNGVLSIETSNSTETVVEVQEGMEIDRGYISPQFVTNQERLLVEYDNCRVLVTDQKIDAIRDIIPILEQVTRLNAPLLIIAEDVSGEALATLVVNKLRGVLNVCAIKAPGFGERRKSLLQDIAIVTGAEFIAKDLGMKVEQAVVEQLGVARKVTVANNTTTLIADAASKDEIEMRIAQLKKELAETDSVYDTEKLSERIAKLSGGVAVIKVGAATEAELEDRKLRIEDAKNATFAAVEEGIVPGGGAALLHLSELVPAFKETLTDAEEKLGADIVMKSLRAPCRLIADNAGVEGEVIVQRLLGKPFEVGYNAMIDKVENLLDAGVIDPAKVTRNGLLNSVSIAGIMLTTQAVMVEKHKPSEIPGGMTASGMPSGMTI.

Polar residues predominate over residues 1-17 (MAQSQLAKGSRQTTGRP). The segment at 1-24 (MAQSQLAKGSRQTTGRPFQNKPAR) is disordered.

Belongs to the chaperonin (HSP60) family. As to quaternary structure, oligomer of probably six alpha and six beta subunits.

Its subcellular location is the plastid. The protein localises to the chloroplast. This protein binds RuBisCO small and large subunits and is implicated in the assembly of the enzyme oligomer. This is RuBisCO large subunit-binding protein subunit alpha, chloroplastic from Chlamydomonas reinhardtii (Chlamydomonas smithii).